Consider the following 279-residue polypeptide: Bifunctional protein FolD (279 aa).

NADP(+) contacts are provided by residues Gly158–Ser160, Ser183, and Ile224.

The protein belongs to the tetrahydrofolate dehydrogenase/cyclohydrolase family. Homodimer.

It carries out the reaction (6R)-5,10-methylene-5,6,7,8-tetrahydrofolate + NADP(+) = (6R)-5,10-methenyltetrahydrofolate + NADPH. It catalyses the reaction (6R)-5,10-methenyltetrahydrofolate + H2O = (6R)-10-formyltetrahydrofolate + H(+). The protein operates within one-carbon metabolism; tetrahydrofolate interconversion. Its function is as follows. Catalyzes the oxidation of 5,10-methylenetetrahydrofolate to 5,10-methenyltetrahydrofolate and then the hydrolysis of 5,10-methenyltetrahydrofolate to 10-formyltetrahydrofolate. This Caldicellulosiruptor saccharolyticus (strain ATCC 43494 / DSM 8903 / Tp8T 6331) protein is Bifunctional protein FolD.